The following is a 93-amino-acid chain: MRLFILSLFALLVMFQYDFWFGKNGYLDYQDIKAEIIQRKQENKKLSQRNQTIFAEIQDLKNGIEAIEERARMEHEMIKQNEVFYRIVKNKNR.

The Cytoplasmic portion of the chain corresponds to 1–3; it reads MRL. A helical membrane pass occupies residues 4–21; that stretch reads FILSLFALLVMFQYDFWF. The Periplasmic portion of the chain corresponds to 22–93; the sequence is GKNGYLDYQD…FYRIVKNKNR (72 aa). The stretch at 28-76 forms a coiled coil; that stretch reads DYQDIKAEIIQRKQENKKLSQRNQTIFAEIQDLKNGIEAIEERARMEHE.

This sequence belongs to the FtsB family. As to quaternary structure, part of a complex composed of FtsB, FtsL and FtsQ.

It is found in the cell inner membrane. In terms of biological role, essential cell division protein. May link together the upstream cell division proteins, which are predominantly cytoplasmic, with the downstream cell division proteins, which are predominantly periplasmic. The sequence is that of Cell division protein FtsB from Histophilus somni (strain 129Pt) (Haemophilus somnus).